A 137-amino-acid chain; its full sequence is Small ribosomal subunit protein uS9c (137 aa).

The protein belongs to the universal ribosomal protein uS9 family.

It localises to the plastid. The protein localises to the chloroplast. This Chlorella vulgaris (Green alga) protein is Small ribosomal subunit protein uS9c (rps9).